The chain runs to 110 residues: uncharacterized protein (110 aa).

A disordered region spans residues 85-110 (ARKAERPSQGGKDYNGTAKSAQSTTV). The segment covering 101–110 (TAKSAQSTTV) has biased composition (polar residues).

This is an uncharacterized protein from Saccharomyces cerevisiae (strain ATCC 204508 / S288c) (Baker's yeast).